The following is a 411-amino-acid chain: Dipeptidase 1 (411 aa).

The first 16 residues, 1–16 (MWSGWWLWPLVAVCTA), serve as a signal peptide directing secretion. Histidine 36 and aspartate 38 together coordinate Zn(2+). The N-linked (GlcNAc...) asparagine glycan is linked to asparagine 57. Cysteine 87 and cysteine 170 are disulfide-bonded. Glutamate 141 contacts Zn(2+). A substrate-binding site is contributed by histidine 168. Zn(2+) contacts are provided by histidine 214 and histidine 235. A disulfide bond links cysteine 242 and cysteine 274. Arginine 246 provides a ligand contact to substrate. N-linked (GlcNAc...) asparagine glycosylation occurs at asparagine 279. Aspartate 304 contacts substrate. N-linked (GlcNAc...) asparagine glycosylation is found at asparagine 332 and asparagine 358. Serine 385 carries GPI-anchor amidated serine lipidation. Positions 386 to 411 (GASSLHRHWGLLLASLAPLVLCLSLL) are cleaved as a propeptide — removed in mature form.

The protein belongs to the metallo-dependent hydrolases superfamily. Peptidase M19 family. As to quaternary structure, homodimer; disulfide-linked. Zn(2+) is required as a cofactor. Expressed in lung and kidneys.

The protein resides in the apical cell membrane. It localises to the cell projection. Its subcellular location is the microvillus membrane. It carries out the reaction an L-aminoacyl-L-amino acid + H2O = 2 an L-alpha-amino acid. It catalyses the reaction leukotriene D4 + H2O = leukotriene E4 + glycine. The enzyme catalyses a beta-lactam + H2O = a substituted beta-amino acid. The catalysed reaction is L-cystine-bis-glycine + 2 H2O = L-cystine + 2 glycine. It carries out the reaction glycyldehydrophenylalanine + H2O = 2,3-didehydrophenylalanine + glycine. Inhibited by L-penicillamine. Beta-lactamase activity is inhibited by cilastatin. Hydrolyzes a wide range of dipeptides including the conversion of leukotriene D4 to leukotriene E4. Hydrolyzes cystinyl-bis-glycine (cys-bis-gly) formed during glutathione degradation. Also possesses beta lactamase activity and can hydrolyze the beta-lactam antibiotic imipenem. Its function is as follows. Independently of its dipeptidase activity, acts as an adhesion receptor for neutrophil recruitment from bloodstream into inflamed lungs and liver. This chain is Dipeptidase 1 (DPEP1), found in Homo sapiens (Human).